We begin with the raw amino-acid sequence, 559 residues long: Large neutral amino acids transporter small subunit 3 (559 aa).

A helical membrane pass occupies residues Val-20–Leu-40. Asn-57 is a glycosylation site (N-linked (GlcNAc...) asparagine). A run of 5 helical transmembrane segments spans residues Leu-78–Met-98, Pro-105–Ala-124, Leu-131–Phe-151, Met-168–Ile-188, and Ala-191–Leu-211. N-linked (GlcNAc...) asparagine glycosylation is found at Asn-212 and Asn-229. Phosphoserine occurs at positions 237, 262, and 267. 6 helical membrane-spanning segments follow: residues Phe-304 to Ala-324, Ser-357 to Met-377, Ala-419 to Ile-439, Phe-446 to Leu-466, Leu-485 to Leu-505, and Phe-510 to Leu-530.

This sequence belongs to the SLC43A transporter (TC 2.A.1.44) family. Ubiquitously expressed in fetus and adult. Highest expression in adult pancreas, liver, skeletal muscle. In fetus, highest expression in liver and lower levels in kidney, and lung. Exclusively expressed in the glomeruli along the glomerular capillary walls.

Its subcellular location is the cell membrane. It localises to the apical cell membrane. The protein resides in the endoplasmic reticulum membrane. The enzyme catalyses D-leucine(in) = D-leucine(out). It catalyses the reaction L-leucine(in) = L-leucine(out). It carries out the reaction L-isoleucine(in) = L-isoleucine(out). The catalysed reaction is L-methionine(in) = L-methionine(out). The enzyme catalyses L-phenylalanine(in) = L-phenylalanine(out). It catalyses the reaction L-valine(in) = L-valine(out). Uniport that mediates the transport of neutral amino acids such as L-leucine, L-isoleucine, L-valine, and L-phenylalanine. The transport activity is sodium ions-independent, electroneutral and mediated by a facilitated diffusion. The chain is Large neutral amino acids transporter small subunit 3 from Homo sapiens (Human).